Consider the following 342-residue polypeptide: MSEAIKTDVLIVGAGPCGLFAVFELGLLDVKVHLVDILDKIGGQCAELYPEKPIYDIPGIPMITGHGLTESLLEQIKPFNPTFHLNEMIETVEKIGDPGFRVTTDAGKVFECKVLVVAAGGGSFQPKRPPVPGIEAYEGGSVHYAVRKMEEFRDKDLMIVGGGDSALDWVLNLHPLAKRITLVHRRDDFRAAPHSVEQMRALVASGQMDLLIGQVTALDGEGKELSAATVKGNDGTTTKVACNAMLPFFGLTMKLGPVANWGLHLENNLVPVDTGTFETNVPGIFAIGDINTYPGKLKLILSGFHEGALMAQKAVKYVYPDKRVVFQYTTSSSSLQKKLGVN.

FAD-binding residues include Cys-17, Asp-36, Gln-44, Tyr-49, Ile-89, Phe-124, Asp-289, and Thr-330.

Belongs to the ferredoxin--NADP reductase type 2 family. In terms of assembly, homodimer. Requires FAD as cofactor.

It catalyses the reaction 2 reduced [2Fe-2S]-[ferredoxin] + NADP(+) + H(+) = 2 oxidized [2Fe-2S]-[ferredoxin] + NADPH. The chain is Ferredoxin--NADP reductase from Rhodopseudomonas palustris (strain BisB18).